The chain runs to 325 residues: Transcription initiation factor IIB 2 (325 aa).

The span at 1 to 13 (MSDSTIRTYSSDQ) shows a compositional bias: polar residues. A disordered region spans residues 1–29 (MSDSTIRTYSSDQRQTDNDETVSTPDEDV). A TFIIB-type zinc finger spans residues 28–58 (DVLTCPECGGQVIDDEEHGESVCVDCGLVVE). Zn(2+) is bound by residues Cys-32, Cys-35, Cys-50, and Cys-53. The interval 73 to 93 (STEKDEKSRVGAPTTNMMHDK) is disordered. 2 repeat units span residues 144–227 (GEIE…VREL) and 238–319 (QYVP…ELLE).

Belongs to the TFIIB family.

Functionally, stabilizes TBP binding to an archaeal box-A promoter. Also responsible for recruiting RNA polymerase II to the pre-initiation complex (DNA-TBP-TFIIB). The polypeptide is Transcription initiation factor IIB 2 (Halobacterium salinarum (strain ATCC 700922 / JCM 11081 / NRC-1) (Halobacterium halobium)).